The primary structure comprises 673 residues: F-box/LRR-repeat protein 17 (673 aa).

The interval 1 to 39 (MGHVAPHASKKEHVAPHAAEKDHVAPHASKKEHVAPHAA) is disordered. A compositionally biased stretch (basic and acidic residues) spans 9-39 (SKKEHVAPHAAEKDHVAPHASKKEHVAPHAA). Positions 291 to 338 (PLHINQLPSSLLLKIFSNLSLNERCILASLVCKYWRDLCLDSQFWKQL) constitute an F-box domain.

Belongs to the FBXL17 family. As to quaternary structure, part of the SCF (SKP1-CUL1-F-box) E3 ubiquitin-protein ligase complex SCF(FBXL17). Interacts with BTB domain-containing proteins; specifically recognizes and binds a conserved degron of non-consecutive residues present at the interface of BTB dimers of aberrant composition. Expressed in the neuro-ectoderm of embryos.

It is found in the cytoplasm. The protein resides in the nucleus. Substrate-recognition component of the SCF(FBXL17) E3 ubiquitin ligase complex, a key component of a quality control pathway required to ensure functional dimerization of BTB domain-containing proteins (dimerization quality control, DQC). FBXL17 specifically recognizes and binds a conserved degron of non-consecutive residues present at the interface of BTB dimers of aberrant composition: aberrant BTB dimer are then ubiquitinated by the SCF(FBXL17) complex and degraded by the proteasome. The ability of the SCF(FBXL17) complex to eliminate compromised BTB dimers is required for the differentiation and survival of neural crest and neuronal cells. In Xenopus laevis (African clawed frog), this protein is F-box/LRR-repeat protein 17.